The following is a 79-amino-acid chain: Panulirin (79 aa).

The signal sequence occupies residues Met-1 to Gly-22. The propeptide occupies Asp-23–Pro-26. 3 disulfides stabilise this stretch: Cys-33/Cys-63, Cys-40/Cys-56, and Cys-46/Cys-64. Residues Gln-75–Ala-79 constitute a propeptide that is removed on maturation.

Monomer. Contains 3 disulfide bonds. In terms of tissue distribution, expressed in hemocytes (at protein level).

Its function is as follows. Involved in the melanization cascade in response to lipopolysaccharide (LPS). In vitro, reversibly and competitively inhibits trypsin (Ki=8.6 nM) but not serine proteases chymotrypsin, elastase, subtilisin, thrombin and plasmin, cysteine peptidase papain or metallopeptidase carboxypeptidase A. The polypeptide is Panulirin (Panulirus argus (Caribbean spiny lobster)).